Consider the following 141-residue polypeptide: D-aminoacyl-tRNA deacylase (141 aa).

The short motif at 133-134 (GP) is the Gly-cisPro motif, important for rejection of L-amino acids element.

It belongs to the DTD family. In terms of assembly, homodimer.

It localises to the cytoplasm. The catalysed reaction is glycyl-tRNA(Ala) + H2O = tRNA(Ala) + glycine + H(+). The enzyme catalyses a D-aminoacyl-tRNA + H2O = a tRNA + a D-alpha-amino acid + H(+). In terms of biological role, an aminoacyl-tRNA editing enzyme that deacylates mischarged D-aminoacyl-tRNAs. Also deacylates mischarged glycyl-tRNA(Ala), protecting cells against glycine mischarging by AlaRS. Acts via tRNA-based rather than protein-based catalysis; rejects L-amino acids rather than detecting D-amino acids in the active site. By recycling D-aminoacyl-tRNA to D-amino acids and free tRNA molecules, this enzyme counteracts the toxicity associated with the formation of D-aminoacyl-tRNA entities in vivo and helps enforce protein L-homochirality. The protein is D-aminoacyl-tRNA deacylase of Beutenbergia cavernae (strain ATCC BAA-8 / DSM 12333 / CCUG 43141 / JCM 11478 / NBRC 16432 / NCIMB 13614 / HKI 0122).